The primary structure comprises 123 residues: Small ribosomal subunit protein uS12 (123 aa).

Residues 1-31 (MPTIQQLVRKGRHSKKAKVATAGLKGSPQRR) are disordered. The span at 9–18 (RKGRHSKKAK) shows a compositional bias: basic residues. Asp89 is modified (3-methylthioaspartic acid).

The protein belongs to the universal ribosomal protein uS12 family. As to quaternary structure, part of the 30S ribosomal subunit. Contacts proteins S8 and S17. May interact with IF1 in the 30S initiation complex.

With S4 and S5 plays an important role in translational accuracy. Its function is as follows. Interacts with and stabilizes bases of the 16S rRNA that are involved in tRNA selection in the A site and with the mRNA backbone. Located at the interface of the 30S and 50S subunits, it traverses the body of the 30S subunit contacting proteins on the other side and probably holding the rRNA structure together. The combined cluster of proteins S8, S12 and S17 appears to hold together the shoulder and platform of the 30S subunit. This chain is Small ribosomal subunit protein uS12, found in Corynebacterium aurimucosum (strain ATCC 700975 / DSM 44827 / CIP 107346 / CN-1) (Corynebacterium nigricans).